The chain runs to 357 residues: MGGLEVEKTTIGWAARDPSGVLSPYTYTLRNTGPEDVEVKVLYCGLCHTDLHQVKNDLGMSNYPLVPGHEVVGEVVEVGPDVSKFKVGDTVGVGLLVGSCRNCGPCKRDIEQYCNKKIWNCNDVYTDGKPTQGGFAKSMVVDQKFVVKIPEGMAPEQAAPLLCAGITVYSPLNHFGFKQSGLRGGILGLGGVGHMGVKIAKAMGHHVTVISSSNKKRQEALEHLGADDYLVSSDTDKMQEASDSLDYIIDTVPVGHPLEPYLSLLKIDGKLILMGVINTPLQFISPMVMLGRKSITGSFIGSMKETEEMLDFCKEKGVTSQIEIVKMDYINTAMERLEKNDVRYRFVVDVIGSKLDQ.

Cys47 contacts Zn(2+). Position 49 (Thr49) interacts with NADP(+). Zn(2+) is bound by residues His69, Glu70, Cys100, Cys103, Cys106, Cys114, and Cys163. Residues Thr167, 188 to 193, 211 to 216, Thr251, Gly275, and 298 to 300 each bind NADP(+); these read GLGGVG, SSSNKK, and SFI.

The protein belongs to the zinc-containing alcohol dehydrogenase family. As to quaternary structure, homodimer. The cofactor is Zn(2+). The N-terminus is blocked.

It catalyses the reaction (E)-cinnamyl alcohol + NADP(+) = (E)-cinnamaldehyde + NADPH + H(+). The catalysed reaction is (E)-coniferol + NADP(+) = (E)-coniferaldehyde + NADPH + H(+). It carries out the reaction (E)-sinapyl alcohol + NADP(+) = (E)-sinapaldehyde + NADPH + H(+). The enzyme catalyses (E)-4-coumaroyl alcohol + NADP(+) = (E)-4-coumaraldehyde + NADPH + H(+). It catalyses the reaction (E)-caffeyl alcohol + NADP(+) = (E)-caffeyl aldehyde + NADPH + H(+). Its pathway is aromatic compound metabolism; phenylpropanoid biosynthesis. Involved in lignin biosynthesis. Catalyzes the final step specific for the production of lignin monomers. Catalyzes the NADPH-dependent reduction of coniferaldehyde, 5-hydroxyconiferaldehyde, sinapaldehyde, 4-coumaraldehyde and caffeyl aldehyde to their respective alcohols. The chain is Probable cinnamyl alcohol dehydrogenase 1 from Nicotiana tabacum (Common tobacco).